Here is a 683-residue protein sequence, read N- to C-terminus: Phosphomethylpyrimidine synthase (683 aa).

Substrate is bound by residues asparagine 235, methionine 264, tyrosine 293, histidine 329, serine 349–glycine 351, aspartate 390–arginine 393, and glutamate 429. Histidine 433 serves as a coordination point for Zn(2+). Position 456 (tyrosine 456) interacts with substrate. Histidine 497 is a Zn(2+) binding site. 3 residues coordinate [4Fe-4S] cluster: cysteine 577, cysteine 580, and cysteine 585. The segment at arginine 647 to valine 683 is disordered. Positions glutamate 653–threonine 675 are enriched in low complexity.

This sequence belongs to the ThiC family. Homodimer. [4Fe-4S] cluster is required as a cofactor.

It carries out the reaction 5-amino-1-(5-phospho-beta-D-ribosyl)imidazole + S-adenosyl-L-methionine = 4-amino-2-methyl-5-(phosphooxymethyl)pyrimidine + CO + 5'-deoxyadenosine + formate + L-methionine + 3 H(+). It participates in cofactor biosynthesis; thiamine diphosphate biosynthesis. Catalyzes the synthesis of the hydroxymethylpyrimidine phosphate (HMP-P) moiety of thiamine from aminoimidazole ribotide (AIR) in a radical S-adenosyl-L-methionine (SAM)-dependent reaction. The chain is Phosphomethylpyrimidine synthase from Shewanella loihica (strain ATCC BAA-1088 / PV-4).